The chain runs to 478 residues: Protein ZINC INDUCED FACILITATOR-LIKE 1 (478 aa).

12 helical membrane-spanning segments follow: residues 43–63, 81–101, 108–128, 130–150, 169–189, 208–228, 280–300, 317–337, 346–367, 378–398, 415–435, and 453–473; these read IIVLCTALPISSLFPFLYFMI, FVGCSFMLGRAFTSVAWGLVA, PVILIGTASVVVFNTLFGLSL, FWMAIITRFCLGSFNGLLGPI, AVSTAWGIGLIIGPAIGGFLA, FPFFLPCLAISVFAFLVTIVS, IIVYCVFSLHDMAYTEIFSLW, VGSVLAFSGFGLLIFQLSLYS, IIVTRISGSLAMVVLSCYPLIA, VTSASVAKSVLGTSAITGLFI, IAMTAMSLFKAIGPAAAGIIF, and VFFILNVVLALGVVLTFKPFL.

Belongs to the major facilitator superfamily. Predominantly expressed in roots and stomatal guard cells. Detected in anther stamen filaments and shoot apical meristem. In the mature portion of roots, restricted to the cortex. At the root tip, highly expressed in both the cortical and epidermal cell layers of the apical meristem and the transition zone, while absent from the quiescent center or the columella cells. Not detected in lateral root primordia.

It is found in the cell membrane. The protein localises to the vacuole membrane. Functionally, major facilitator superfamily (MFS) transporter probably involved in 2,4-dichlorophenoxyacetic acid (2,4-D) export. K(+) may be the physiological substrate of the transporter. Its function is as follows. Modulates root auxin-related processes. Involved in auxin efflux and acts as a positive regulator of shootward transport at the root apex. May mediate proton efflux from the vacuolar compartment. Mediates drought stress tolerance by regulating stomatal closure. This is Protein ZINC INDUCED FACILITATOR-LIKE 1 (ZIFL1) from Arabidopsis thaliana (Mouse-ear cress).